Here is an 80-residue protein sequence, read N- to C-terminus: NAD(P)H-quinone oxidoreductase subunit O (80 aa).

It belongs to the complex I NdhO subunit family. As to quaternary structure, NDH-1 can be composed of about 15 different subunits; different subcomplexes with different compositions have been identified which probably have different functions.

It localises to the cellular thylakoid membrane. It catalyses the reaction a plastoquinone + NADH + (n+1) H(+)(in) = a plastoquinol + NAD(+) + n H(+)(out). It carries out the reaction a plastoquinone + NADPH + (n+1) H(+)(in) = a plastoquinol + NADP(+) + n H(+)(out). Its function is as follows. NDH-1 shuttles electrons from an unknown electron donor, via FMN and iron-sulfur (Fe-S) centers, to quinones in the respiratory and/or the photosynthetic chain. The immediate electron acceptor for the enzyme in this species is believed to be plastoquinone. Couples the redox reaction to proton translocation, and thus conserves the redox energy in a proton gradient. Cyanobacterial NDH-1 also plays a role in inorganic carbon-concentration. The polypeptide is NAD(P)H-quinone oxidoreductase subunit O (Prochlorococcus marinus subsp. pastoris (strain CCMP1986 / NIES-2087 / MED4)).